A 170-amino-acid chain; its full sequence is Translationally-controlled tumor protein homolog (170 aa).

Residues 1–170 enclose the TCTP domain; the sequence is MLIYSDIITG…WKHGLKETKV (170 aa).

This sequence belongs to the TCTP family.

It is found in the cytoplasm. The protein resides in the cytoskeleton. In terms of biological role, involved in protein synthesis. Involved in microtubule stabilization. In Neurospora crassa (strain ATCC 24698 / 74-OR23-1A / CBS 708.71 / DSM 1257 / FGSC 987), this protein is Translationally-controlled tumor protein homolog.